The chain runs to 785 residues: Potassium transporter 5 (785 aa).

Over 1-60 (MDGEEHQIDGDEVNNHENKLNEKKKSWGKLYRPDSFIIEAGQTPTNTGRRSLMSWRTTMS) the chain is Cytoplasmic. The residue at position 35 (Ser35) is a Phosphoserine. Residues 61 to 81 (LAFQSLGVVYGDIGTSPLYVY) form a helical membrane-spanning segment. Topologically, residues 82-97 (ASTFTDGINDKDDVVG) are extracellular. The chain crosses the membrane as a helical span at residues 98–118 (VLSLIIYTITLVALLKYVFIV). The Cytoplasmic portion of the chain corresponds to 119 to 184 (LQANDNGEGG…EKLENSKFAK (66 aa)). Residues 185–205 (IILFLVTIMGTSMVIGDGILT) traverse the membrane as a helical segment. Residues 206 to 218 (PSISVLSAVSGIK) are Extracellular-facing. Residues 219–239 (SLGQNTVVGVSVAILIVLFAF) traverse the membrane as a helical segment. Topologically, residues 240–247 (QRFGTDKV) are cytoplasmic. The helical transmembrane segment at 248 to 268 (GFSFAPIILVWFTFLIGIGLF) threads the bilayer. Over 269 to 297 (NLFKHDITVLKALNPLYIIYYFRRTGRQG) the chain is Extracellular. The chain crosses the membrane as a helical span at residues 298-318 (WISLGGVFLCITGTEAMFADL). At 319–327 (GHFSVRAVQ) the chain is on the cytoplasmic side. Residues 328–348 (ISFSCVAYPALVTIYCGQAAY) traverse the membrane as a helical segment. The Extracellular segment spans residues 349–367 (LTKHTYNVSNTFYDSIPDP). Asn355 is a glycosylation site (N-linked (GlcNAc...) asparagine). A helical membrane pass occupies residues 368–388 (LYWPTFVVAVAASIIASQAMI). Topologically, residues 389–419 (SGAFSVISQSLRMGCFPRVKVVHTSAKYEGQ) are cytoplasmic. The chain crosses the membrane as a helical span at residues 420–440 (VYIPEINYLLMLACIAVTLAF). The Extracellular segment spans residues 441–451 (RTTEKIGHAYG). A helical transmembrane segment spans residues 452 to 472 (IAVVTVMVITTLMVTLIMLVI). The Cytoplasmic portion of the chain corresponds to 473-476 (WKTN). The chain crosses the membrane as a helical span at residues 477 to 497 (IVWIAIFLVVFGSIEMLYLSS). Over 498 to 501 (VMYK) the chain is Extracellular. The chain crosses the membrane as a helical span at residues 502–522 (FTSGGYLPLTITVVLMAMMAI). Topologically, residues 523 to 785 (WQYVHVLKYR…LLKVGMTYEL (263 aa)) are cytoplasmic. The disordered stretch occupies residues 660-699 (GGEVDETDKEEEPNAETTVVPSSNYVPSSGRIGSAHSSSS). Residues 662–673 (EVDETDKEEEPN) are compositionally biased toward acidic residues. Polar residues predominate over residues 674–686 (AETTVVPSSNYVP). A compositionally biased stretch (low complexity) spans 687–697 (SSGRIGSAHSS).

It belongs to the HAK/KUP transporter (TC 2.A.72.3) family. Interacts with ILK1. In terms of processing, phosphorylated at the N-terminus (amino acids 1-95) by CIPK23. As to expression, predominantly expressed in the roots.

It is found in the cell membrane. Its function is as follows. High-affinity potassium transporter. Can also transport rubidium and cesium. Is essential with AKT1 for high-affinity potassium uptake in roots during seedling establishment and postgermination growth under low potassium conditions. Mediates potassium uptake by plant roots in response to low potassium conditions, by a calcium-, CBL-, and CIPK-dependent pathway. Positively regulated by the calcium sensors calcineurin B-like genes CBL1, CBL8, CBL9 and CBL10, and by phosphorylation by CIPK23. The sequence is that of Potassium transporter 5 (POT5) from Arabidopsis thaliana (Mouse-ear cress).